We begin with the raw amino-acid sequence, 88 residues long: Small ribosomal subunit protein bS20 (88 aa).

Disordered regions lie at residues 1–25 (MANS…KARR) and 61–88 (GVTK…ALGA).

Belongs to the bacterial ribosomal protein bS20 family.

Binds directly to 16S ribosomal RNA. This Jannaschia sp. (strain CCS1) protein is Small ribosomal subunit protein bS20.